Here is a 283-residue protein sequence, read N- to C-terminus: Pantothenate synthetase 1 (283 aa).

ATP is bound at residue 30-37; the sequence is MGYLHDGH. His-37 (proton donor) is an active-site residue. Gln-61 serves as a coordination point for (R)-pantoate. Gln-61 contacts beta-alanine. 147–150 provides a ligand contact to ATP; sequence GQKD. (R)-pantoate is bound at residue Gln-153. ATP is bound by residues Val-176 and 184 to 187; that span reads MSSR.

This sequence belongs to the pantothenate synthetase family. Homodimer.

The protein resides in the cytoplasm. The enzyme catalyses (R)-pantoate + beta-alanine + ATP = (R)-pantothenate + AMP + diphosphate + H(+). It functions in the pathway cofactor biosynthesis; (R)-pantothenate biosynthesis; (R)-pantothenate from (R)-pantoate and beta-alanine: step 1/1. In terms of biological role, catalyzes the condensation of pantoate with beta-alanine in an ATP-dependent reaction via a pantoyl-adenylate intermediate. This Bradyrhizobium diazoefficiens (strain JCM 10833 / BCRC 13528 / IAM 13628 / NBRC 14792 / USDA 110) protein is Pantothenate synthetase 1.